The primary structure comprises 422 residues: Dioxygenase str8 (422 aa).

Cys-73, Cys-75, Cys-78, and His-119 together coordinate Zn(2+). Fe cation-binding residues include His-243, Asp-245, and His-382.

Belongs to the gamma-BBH/TMLD family. It depends on Fe(2+) as a cofactor.

It functions in the pathway mycotoxin biosynthesis. In terms of biological role, dioxygenase; part of the gene cluster that mediates the biosynthesis of strobilurin A, an antifungal polyketide that contains a key beta-methoxyacrylate toxophore that targets the complex III of the mitochondrial electron transport chain. Strobilurin biosynthesis begins with construction of benzoyl CoA by step-wise elimination of ammonia from phenylalanine by the phenylalanine ammonia-lyase str11, oxygenation by str8 and retro-Claisen reaction to form benzoic acid, which is activated to its CoA thiolester benzoyl CoA by the dedicated CoA ligase str10. Benzoyl CoA forms the starter unit for the highly reducing polyketide synthase stpks1 that produces the polyketide prestrobilutin A. The FAD-dependent oxygenase str9 then catalyzes the key oxidative rearrangement responsible for the creation of the beta-methoxyacrylate toxophore. Str9 performs epoxidation of the 2,3 olefin of prestrobilutin A, followed by Meinwald rearrangement to furnish the aldehyde intermediate. Rapid enolization of the aldehyde intermediate would give the beta-methoxyacrylate skeleton and methylations catalyzed by str2 and str3 complete the synthesis and lead to the production of strobilurin A. The short-chain dehydrogenase stl2 and the dehydrogenase str4 play a role in the shunt pathway leading to the production of bolineol. The cluster encodes no obvious halogenase gene that could be involved in production of strobilurin B, nor any obvious dimethylallyl-transferase that could be involved in the production of strobilurin G. It is possible that unknown proteins encoded in, or near, the cluster (such as str1 or stl1) may form new classes of halogenases or dimethylally-transferases, or that the responsible genes are located elsewhere on the genome. Similarly, proteins encoded by str5/str6 hydrolases appear to have no chemical role in the biosynthesis of strobilurin A. Finally, no obvious self-resistance gene is found within the cluster. The chain is Dioxygenase str8 from Strobilurus tenacellus.